The primary structure comprises 232 residues: 5'-methylthioadenosine/S-adenosylhomocysteine nucleosidase (232 aa).

The Proton acceptor role is filled by Glu-12. Substrate-binding positions include Gly-78, Ile-152, and 173 to 174 (ME). Asp-197 functions as the Proton donor in the catalytic mechanism.

This sequence belongs to the PNP/UDP phosphorylase family. MtnN subfamily. In terms of assembly, homodimer.

It carries out the reaction S-adenosyl-L-homocysteine + H2O = S-(5-deoxy-D-ribos-5-yl)-L-homocysteine + adenine. It catalyses the reaction S-methyl-5'-thioadenosine + H2O = 5-(methylsulfanyl)-D-ribose + adenine. The catalysed reaction is 5'-deoxyadenosine + H2O = 5-deoxy-D-ribose + adenine. It participates in amino-acid biosynthesis; L-methionine biosynthesis via salvage pathway; S-methyl-5-thio-alpha-D-ribose 1-phosphate from S-methyl-5'-thioadenosine (hydrolase route): step 1/2. Its function is as follows. Catalyzes the irreversible cleavage of the glycosidic bond in both 5'-methylthioadenosine (MTA) and S-adenosylhomocysteine (SAH/AdoHcy) to adenine and the corresponding thioribose, 5'-methylthioribose and S-ribosylhomocysteine, respectively. Also cleaves 5'-deoxyadenosine, a toxic by-product of radical S-adenosylmethionine (SAM) enzymes, into 5-deoxyribose and adenine. Thus, is required for in vivo function of the radical SAM enzymes biotin synthase and lipoic acid synthase, that are inhibited by 5'-deoxyadenosine accumulation. The sequence is that of 5'-methylthioadenosine/S-adenosylhomocysteine nucleosidase from Edwardsiella ictaluri (strain 93-146).